The following is a 1868-amino-acid chain: Dedicator of cytokinesis protein 5 (1868 aa).

The SH3 domain maps to 8 to 69 (KRQKYGVAIY…PETYIHLKEA (62 aa)). Phosphoserine is present on S365. The 185-residue stretch at 443–627 (RNDIYVTLIH…DSFQIATLIC (185 aa)) folds into the C2 DOCK-type domain. K818 is modified (N6-acetyllysine). Positions 1231–1642 (YKDKKREDIY…VEKLYGVITL (412 aa)) constitute a DOCKER domain. A compositionally biased stretch (low complexity) spans 1681-1692 (STSSNSSDNASS). Disordered stretches follow at residues 1681–1730 (STSS…RISK) and 1742–1868 (QVIA…PGSQ). The span at 1704–1728 (LFERRASSGARVEDLPPKEDSENRI) shows a compositional bias: basic and acidic residues. Residues S1755, S1765, S1771, S1784, and S1788 each carry the phosphoserine modification. The residue at position 1793 (T1793) is a Phosphothreonine. The segment covering 1796–1810 (ATRTLSSPSLQTDGL) has biased composition (polar residues). 2 positions are modified to phosphoserine: S1832 and S1867.

It belongs to the DOCK family. In terms of assembly, interacts with CRK and CRKL. Interacts (via N-terminus) with tensin TNS3 (via N-terminus); the interaction increases DOCK5 guanine nucleotide exchange activity towards Rac. Interacts with ELMO1. As to expression, highly expressed in lens, where it predominantly localizes to anterior epithelial cells, and is weakly expressed in lens fiber (at protein level). Expressed in brain, eye, lung, spleen and kidney, but not in thymus or peripheral blood leukocytes.

The protein localises to the cytoplasm. It localises to the cell membrane. The protein resides in the cell projection. It is found in the podosome. Functionally, guanine nucleotide exchange factor (GEF) for Rho and Rac. GEF proteins activate small GTPases by exchanging bound GDP for free GTP. Along with DOCK1, mediates CRK/CRKL regulation of epithelial and endothelial cell spreading and migration on type IV collagen. The chain is Dedicator of cytokinesis protein 5 from Mus musculus (Mouse).